Reading from the N-terminus, the 733-residue chain is Phosphoribosylformylglycinamidine synthase subunit PurL (733 aa).

His-41 is an active-site residue. Positions 44 and 83 each coordinate ATP. Glu-85 contributes to the Mg(2+) binding site. Substrate is bound by residues 86-89 and Arg-108; that span reads SHNH. His-87 serves as the catalytic Proton acceptor. Asp-109 contacts Mg(2+). Residues 212 to 232 form a disordered region; that stretch reads GASFASQELSEESEEKRPSVQ. Gln-232 is a binding site for substrate. Asp-260 lines the Mg(2+) pocket. 304-306 serves as a coordination point for substrate; that stretch reads ESQ. ATP is bound by residues Asp-488 and Gly-525. Asn-526 is a Mg(2+) binding site. Residue Ser-528 coordinates substrate.

It belongs to the FGAMS family. Monomer. Part of the FGAM synthase complex composed of 1 PurL, 1 PurQ and 2 PurS subunits.

The protein localises to the cytoplasm. It carries out the reaction N(2)-formyl-N(1)-(5-phospho-beta-D-ribosyl)glycinamide + L-glutamine + ATP + H2O = 2-formamido-N(1)-(5-O-phospho-beta-D-ribosyl)acetamidine + L-glutamate + ADP + phosphate + H(+). The protein operates within purine metabolism; IMP biosynthesis via de novo pathway; 5-amino-1-(5-phospho-D-ribosyl)imidazole from N(2)-formyl-N(1)-(5-phospho-D-ribosyl)glycinamide: step 1/2. Part of the phosphoribosylformylglycinamidine synthase complex involved in the purines biosynthetic pathway. Catalyzes the ATP-dependent conversion of formylglycinamide ribonucleotide (FGAR) and glutamine to yield formylglycinamidine ribonucleotide (FGAM) and glutamate. The FGAM synthase complex is composed of three subunits. PurQ produces an ammonia molecule by converting glutamine to glutamate. PurL transfers the ammonia molecule to FGAR to form FGAM in an ATP-dependent manner. PurS interacts with PurQ and PurL and is thought to assist in the transfer of the ammonia molecule from PurQ to PurL. The sequence is that of Phosphoribosylformylglycinamidine synthase subunit PurL from Thermoanaerobacter pseudethanolicus (strain ATCC 33223 / 39E) (Clostridium thermohydrosulfuricum).